Here is a 131-residue protein sequence, read N- to C-terminus: Glycine cleavage system H protein (131 aa).

The Lipoyl-binding domain occupies 24–106 (TVRVGITDYA…YGEGWLVELQ (83 aa)). K65 is modified (N6-lipoyllysine).

This sequence belongs to the GcvH family. The glycine cleavage system is composed of four proteins: P, T, L and H. (R)-lipoate serves as cofactor.

Functionally, the glycine cleavage system catalyzes the degradation of glycine. The H protein shuttles the methylamine group of glycine from the P protein to the T protein. The sequence is that of Glycine cleavage system H protein from Mycolicibacterium vanbaalenii (strain DSM 7251 / JCM 13017 / BCRC 16820 / KCTC 9966 / NRRL B-24157 / PYR-1) (Mycobacterium vanbaalenii).